Reading from the N-terminus, the 153-residue chain is Movement protein TGB3 (153 aa).

Topologically, residues 1–50 (MEAPAITHSSGCVCSDCQWSGSPTVDTKVYLGSGTHANTTKTRETSFLSV) are cytoplasmic. Residues 51–71 (LNDNAWLFVIAALILCLYFII) traverse the membrane as a helical segment. Topologically, residues 72–127 (SKPHVDAVYTEFHQDLNGFSMKLAPGVPIDPKVIAAVKNWQKYPFGTDPRENMVTS) are lumenal. Residues 128-148 (IVSGLRHSFCILLLVVVLLVY) traverse the membrane as a helical segment. Residues 149–153 (VCHKP) are Cytoplasmic-facing.

Belongs to the virgaviridae TGB3 movement protein family. As to quaternary structure, interacts with movement proteins TGB1 and TGB2. TGB1-TGB3-TGB2 complex formation is enhanced by ATP hydrolysis.

It localises to the host cell junction. It is found in the host plasmodesma. The protein resides in the host endoplasmic reticulum membrane. The protein localises to the host cytoplasm. Its subcellular location is the host cytoskeleton. Its function is as follows. Participates in the transport of viral genome to neighboring plant cells directly through plasmodesmata, without any budding. TGBp2 and TGBp3 are necessary for intracellular delivery of TGBp1-containing vRNPs to plasmodesmata. Can gate plasmodesmata and increase their size exclusion limit. Induces host actin cytoskeleton network thickening, which probably plays a major role in virus cell-to-cell movement. The chain is Movement protein TGB3 from Arachis hypogaea (Peanut).